Consider the following 319-residue polypeptide: ATP-dependent 6-phosphofructokinase (319 aa).

G11 contributes to the ATP binding site. ADP is bound at residue 21–25 (RAVVR). ATP is bound by residues 72 to 73 (RC) and 102 to 105 (GEGS). E103 provides a ligand contact to Mg(2+). Residue 126-128 (TID) participates in substrate binding. The active-site Proton acceptor is the D128. Residue K155 participates in ADP binding. Substrate is bound by residues R163 and 170 to 172 (MGR). ADP is bound by residues 186-188 (GAE), R212, and 214-216 (KIN). Substrate contacts are provided by residues E223, R244, and 250 to 253 (HVQR).

This sequence belongs to the phosphofructokinase type A (PFKA) family. ATP-dependent PFK group I subfamily. Prokaryotic clade 'B1' sub-subfamily. As to quaternary structure, homotetramer. Mg(2+) serves as cofactor.

The protein localises to the cytoplasm. It carries out the reaction beta-D-fructose 6-phosphate + ATP = beta-D-fructose 1,6-bisphosphate + ADP + H(+). It functions in the pathway carbohydrate degradation; glycolysis; D-glyceraldehyde 3-phosphate and glycerone phosphate from D-glucose: step 3/4. Allosterically activated by ADP and other diphosphonucleosides, and allosterically inhibited by phosphoenolpyruvate. Its function is as follows. Catalyzes the phosphorylation of D-fructose 6-phosphate to fructose 1,6-bisphosphate by ATP, the first committing step of glycolysis. The chain is ATP-dependent 6-phosphofructokinase from Thermotoga petrophila (strain ATCC BAA-488 / DSM 13995 / JCM 10881 / RKU-1).